The sequence spans 228 residues: Deoxyribose-phosphate aldolase (228 aa).

The Proton donor/acceptor role is filled by Asp96. Lys157 serves as the catalytic Schiff-base intermediate with acetaldehyde. Lys185 functions as the Proton donor/acceptor in the catalytic mechanism.

The protein belongs to the DeoC/FbaB aldolase family. DeoC type 1 subfamily.

It localises to the cytoplasm. It carries out the reaction 2-deoxy-D-ribose 5-phosphate = D-glyceraldehyde 3-phosphate + acetaldehyde. The protein operates within carbohydrate degradation; 2-deoxy-D-ribose 1-phosphate degradation; D-glyceraldehyde 3-phosphate and acetaldehyde from 2-deoxy-alpha-D-ribose 1-phosphate: step 2/2. Its function is as follows. Catalyzes a reversible aldol reaction between acetaldehyde and D-glyceraldehyde 3-phosphate to generate 2-deoxy-D-ribose 5-phosphate. The sequence is that of Deoxyribose-phosphate aldolase from Cyanothece sp. (strain PCC 7425 / ATCC 29141).